A 524-amino-acid polypeptide reads, in one-letter code: Inosine-5'-monophosphate dehydrogenase (524 aa).

CBS domains lie at 121 to 180 (FILD…NTPV) and 184 to 242 (MTPR…PLAS). NAD(+)-binding positions include 280 to 282 (DSS) and 330 to 332 (GMG). Residues Gly-332 and Gly-334 each coordinate K(+). Ser-335 is a binding site for IMP. Cys-337 provides a ligand contact to K(+). Cys-337 (thioimidate intermediate) is an active-site residue. IMP contacts are provided by residues 370 to 372 (DGG), 393 to 394 (GG), and 417 to 421 (YRGMG). The active-site Proton acceptor is the Arg-439. Gln-451 provides a ligand contact to IMP. Glu-510 and Gly-511 together coordinate K(+).

This sequence belongs to the IMPDH/GMPR family. As to quaternary structure, homotetramer. It depends on K(+) as a cofactor.

The protein resides in the cytoplasm. The catalysed reaction is IMP + NAD(+) + H2O = XMP + NADH + H(+). Its pathway is purine metabolism; XMP biosynthesis via de novo pathway; XMP from IMP: step 1/1. Its activity is regulated as follows. Mycophenolic acid (MPA) is a non-competitive inhibitor that prevents formation of the closed enzyme conformation by binding to the same site as the amobile flap. In contrast, mizoribine monophosphate (MZP) is a competitive inhibitor that induces the closed conformation. MPA is a potent inhibitor of mammalian IMPDHs but a poor inhibitor of the bacterial enzymes. MZP is a more potent inhibitor of bacterial IMPDH. Functionally, catalyzes the conversion of inosine 5'-phosphate (IMP) to xanthosine 5'-phosphate (XMP), the first committed and rate-limiting step in the de novo synthesis of guanine nucleotides, and therefore plays an important role in the regulation of cell growth. The chain is Inosine-5'-monophosphate dehydrogenase (gua1) from Schizosaccharomyces pombe (strain 972 / ATCC 24843) (Fission yeast).